Consider the following 156-residue polypeptide: Cyanate hydratase (156 aa).

Active-site residues include Arg-96, Glu-99, and Ser-122.

This sequence belongs to the cyanase family.

It catalyses the reaction cyanate + hydrogencarbonate + 3 H(+) = NH4(+) + 2 CO2. Functionally, catalyzes the reaction of cyanate with bicarbonate to produce ammonia and carbon dioxide. This is Cyanate hydratase from Burkholderia lata (strain ATCC 17760 / DSM 23089 / LMG 22485 / NCIMB 9086 / R18194 / 383).